A 638-amino-acid chain; its full sequence is ATP-dependent zinc metalloprotease FtsH (638 aa).

The Cytoplasmic segment spans residues 1-15; the sequence is MDNNHKGPNDPNSKK. A helical membrane pass occupies residues 16 to 36; it reads PLLQNPLLLIAIFGIIIFVAM. At 37 to 122 the chain is on the periplasmic side; sequence RVMNSDEGFG…INYSGFSESN (86 aa). A helical transmembrane segment spans residues 123–143; it reads FFADILGWLLPVLVILGLWMF. The Cytoplasmic segment spans residues 144–638; sequence MASRMQKNMG…RLVPLEEHAS (495 aa). 216–223 provides a ligand contact to ATP; the sequence is GPPGTGKT. His440 contacts Zn(2+). Glu441 is an active-site residue. His444 and Asp517 together coordinate Zn(2+).

The protein in the central section; belongs to the AAA ATPase family. It in the C-terminal section; belongs to the peptidase M41 family. In terms of assembly, homohexamer. Zn(2+) is required as a cofactor.

The protein localises to the cell inner membrane. In terms of biological role, acts as a processive, ATP-dependent zinc metallopeptidase for both cytoplasmic and membrane proteins. Plays a role in the quality control of integral membrane proteins. The chain is ATP-dependent zinc metalloprotease FtsH from Helicobacter felis (strain ATCC 49179 / CCUG 28539 / NCTC 12436 / CS1).